The primary structure comprises 1871 residues: MANLEESFPRGGTRKIHKPEKAFQQSVEQDNLFDISTEEGSTKRKKSQKGPAKTKKLKIEKRESSKSAREKFEILSVESLCEGMRILGCVKEVNELELVISLPNGLQGFVQVTEICDAYTKKLNEQVTQEQPLKDLLHLPELFSPGMLVRCVVSSLGITDRGKKSVKLSLNPKNVNRVLSAEALKPGMLLTGTVSSLEDHGYLVDIGVDGTRAFLPLLKAQEYIRQKNKGAKLKVGQYLNCIVEKVKGNGGVVSLSVGHSEVSTAIATEQQSWNLNNLLPGLVVKAQVQKVTPFGLTLNFLTFFTGVVDFMHLDPKKAGTYFSNQAVRACILCVHPRTRVVHLSLRPIFLQPGRPLTRLSCQNLGAVLDDVPVQGFFKKAGATFRLKDGVLAYARLSHLSDSKNVFNPEAFKPGNTHKCRIIDYSQMDELALLSLRTSIIEAQYLRYHDIEPGAVVKGTVLTIKSYGMLVKVGEQMRGLVPPMHLADILMKNPEKKYHIGDEVKCRVLLCDPEAKKLMMTLKKTLIESKLPVITCYADAKPGLQTHGFIIRVKDYGCIVKFYNNVQGLVPKHELSTEYIPDPERVFYTGQVVKVVVLNCEPSKERMLLSFKLSSDPEPKKEPAGHSQKKGKAINIGQLVDVKVLEKTKDGLEVAVLPHNIRAFLPTSHLSDHVANGPLLHHWLQAGDILHRVLCLSQSEGRVLLCRKPALVSTVEGGQDPKNFSEIHPGMLLIGFVKSIKDYGVFIQFPSGLSGLAPKAIMSDKFVTSTSDHFVEGQTVAAKVTNVDEEKQRMLLSLRLSDCGLGDLAITSLLLLNQCLEELQGVRSLMSNRDSVLIQTLAEMTPGMFLDLVVQEVLEDGSVVFSGGPVPDLVLKASRYHRAGQEVESGQKKKVVILNVDLLKLEVHVSLHQDLVNRKARKLRKGSEHQAIVQHLEKSFAIASLVETGHLAAFSLTSHLNDTFRFDSEKLQVGQGVSLTLKTTEPGVTGLLLAVEGPAAKRTMRPTQKDSETVDEDEEVDPALTVGTIKKHTLSIGDMVTGTVKSIKPTHVVVTLEDGIIGCIHASHILDDVPEGTSPTTKLKVGKTVTARVIGGRDMKTFKYLPISHPRFVRTIPELSVRPSELEDGHTALNTHSVSPMEKIKQYQAGQTVTCFLKKYNVVKKWLEVEIAPDIRGRIPLLLTSLSFKVLKHPDKKFRVGQALRATVVGPDSSKTLLCLSLTGPHKLEEGEVAMGRVVKVTPNEGLTVSFPFGKIGTVSIFHMSDSYSETPLEDFVPQKVVRCYILSTADNVLTLSLRSSRTNPETKSKVEDPEINSIQDIKEGQLLRGYVGSIQPHGVFFRLGPSVVGLARYSHVSQHSPSKKALYNKHLPEGKLLTARVLRLNHQKNLVELSFLPGDTGKPDVLSASLEGQLTKQEERKTEAEERDQKGEKKNQKRNEKKNQKGQEEVEMPSKEKQQPQKPQAQKRGGRECRESGSEQERVSKKPKKAGLSEEDDSLVDVYYREGKEEAEETNVLPKEKQTKPAEAPRLQLSSGFAWNVGLDSLTPALPPLAESSDSEEDEKPHQATIKKSKKERELEKQKAEKELSRIEEALMDPGRQPESADDFDRLVLSSPNSSILWLQYMAFHLQATEIEKARAVAERALKTISFREEQEKLNVWVALLNLENMYGSQESLTKVFERAVQYNEPLKVFLHLADIYAKSEKFQEAGELYNRMLKRFRQEKAVWIKYGAFLLRRSQAAASHRVLQRALECLPSKEHVDVIAKFAQLEFQLGDAERAKAIFENTLSTYPKRTDVWSVYIDMTIKHGSQKDVRDIFERVIHLSLAPKRMKFFFKRYLDYEKQHGTEKDVQAVKAKALEYVEAKSSVLED.

Positions 1 to 62 (MANLEESFPR…KTKKLKIEKR (62 aa)) are disordered. A2 is subject to N-acetylalanine. Phosphoserine is present on S7. Over residues 43-59 (KRKKSQKGPAKTKKLKI) the composition is skewed to basic residues. S1 motif domains lie at 83–171 (GMRI…LSLN), 187–258 (GMLL…LSVG), 281–346 (GLVV…LSLR), and 365–436 (GAVL…LSLR). S438 carries the phosphoserine modification. S1 motif domains lie at 453 to 522 (GAVV…MTLK), 542 to 611 (GLQT…LSFK), 636 to 707 (GQLV…LCRK), and 729 to 798 (GMLL…LSLR). A disordered region spans residues 998–1018 (AAKRTMRPTQKDSETVDEDEE). Residue K1030 forms a Glycyl lysine isopeptide (Lys-Gly) (interchain with G-Cter in SUMO1) linkage. S1 motif domains lie at 1036–1109 (GDMV…ISHP), 1149–1222 (GQTV…LSLT), 1230–1298 (GEVA…LSLR), and 1324–1396 (GQLL…LSFL). S1360 and S1362 each carry phosphoserine. 2 disordered regions span residues 1395-1531 (FLPG…APRL) and 1549-1586 (ALPPLAESSDSEEDEKPHQATIKKSKKERELEKQKAEK). Residue K1416 forms a Glycyl lysine isopeptide (Lys-Gly) (interchain with G-Cter in SUMO2) linkage. 2 stretches are compositionally biased toward basic and acidic residues: residues 1416 to 1459 (KQEE…EKQQ) and 1469 to 1484 (GGRECRESGSEQERVS). Phosphoserine is present on residues S1476, S1493, and S1498. Over residues 1575–1586 (KERELEKQKAEK) the composition is skewed to basic and acidic residues. 4 HAT repeats span residues 1599-1631 (GRQPESADDFDRLVLSSPNSSILWLQYMAFHLQ), 1705-1737 (EKFQEAGELYNRMLKRFRQEKAVWIKYGAFLLR), 1775-1807 (GDAERAKAIFENTLSTYPKRTDVWSVYIDMTIK), and 1809-1844 (GSQKDVRDIFERVIHLSLAPKRMKFFFKRYLDYEKQ).

Interacts with NF-kappa-B p50/NFKB1 and NF-kappa-B p65/RELA.

It localises to the nucleus. It is found in the nucleolus. In terms of biological role, essential for the generation of mature 18S rRNA, specifically necessary for cleavages at sites A0, 1 and 2 of the 47S precursor. Directly interacts with U3 snoRNA. Involved in the biogenesis of rRNA. This chain is Protein RRP5 homolog (PDCD11), found in Homo sapiens (Human).